The primary structure comprises 397 residues: ATP-dependent RNA helicase RhlB (397 aa).

The Q motif motif lies at 8 to 36; it reads TRFHDFNLAPELMHAIQDLGFPYCTPIQA. Residues 39-219 enclose the Helicase ATP-binding domain; it reads LGFTLKGKDA…KQWTTDPSIV (181 aa). Residue 52 to 59 coordinates ATP; sequence AQTGTGKT. The DEAD box signature appears at 165–168; sequence DEAD. The region spanning 242–392 is the Helicase C-terminal domain; that stretch reads DKYKLLYNLV…TPPTHLLRAV (151 aa).

This sequence belongs to the DEAD box helicase family. RhlB subfamily. Component of the RNA degradosome, which is a multiprotein complex involved in RNA processing and mRNA degradation.

It is found in the cytoplasm. It carries out the reaction ATP + H2O = ADP + phosphate + H(+). DEAD-box RNA helicase involved in RNA degradation. Has RNA-dependent ATPase activity and unwinds double-stranded RNA. This Pseudomonas syringae pv. tomato (strain ATCC BAA-871 / DC3000) protein is ATP-dependent RNA helicase RhlB.